The sequence spans 392 residues: ATP phosphoribosyltransferase regulatory subunit (392 aa).

Belongs to the class-II aminoacyl-tRNA synthetase family. HisZ subfamily. As to quaternary structure, heteromultimer composed of HisG and HisZ subunits.

It is found in the cytoplasm. Its pathway is amino-acid biosynthesis; L-histidine biosynthesis; L-histidine from 5-phospho-alpha-D-ribose 1-diphosphate: step 1/9. Required for the first step of histidine biosynthesis. May allow the feedback regulation of ATP phosphoribosyltransferase activity by histidine. This chain is ATP phosphoribosyltransferase regulatory subunit, found in Prochlorococcus marinus (strain MIT 9211).